A 306-amino-acid polypeptide reads, in one-letter code: Homoserine O-succinyltransferase (306 aa).

Residue C142 is the Acyl-thioester intermediate of the active site. Residues K163 and S192 each contribute to the substrate site. Catalysis depends on H233, which acts as the Proton acceptor. E235 is an active-site residue. R247 contacts substrate.

The protein belongs to the MetA family.

The protein localises to the cytoplasm. The catalysed reaction is L-homoserine + succinyl-CoA = O-succinyl-L-homoserine + CoA. It functions in the pathway amino-acid biosynthesis; L-methionine biosynthesis via de novo pathway; O-succinyl-L-homoserine from L-homoserine: step 1/1. Its function is as follows. Transfers a succinyl group from succinyl-CoA to L-homoserine, forming succinyl-L-homoserine. This chain is Homoserine O-succinyltransferase, found in Pelagibacterium halotolerans (strain DSM 22347 / JCM 15775 / CGMCC 1.7692 / B2).